Here is a 405-residue protein sequence, read N- to C-terminus: 8-amino-7-oxononanoate synthase 1 (405 aa).

Residue Arg-29 participates in substrate binding. 116-117 serves as a coordination point for pyridoxal 5'-phosphate; the sequence is GY. His-141 is a substrate binding site. Residues Ser-187, His-215, and Thr-247 each coordinate pyridoxal 5'-phosphate. N6-(pyridoxal phosphate)lysine is present on Lys-250. A substrate-binding site is contributed by Thr-368.

Belongs to the class-II pyridoxal-phosphate-dependent aminotransferase family. BioF subfamily. In terms of assembly, homodimer. The cofactor is pyridoxal 5'-phosphate.

It catalyses the reaction 6-carboxyhexanoyl-[ACP] + L-alanine + H(+) = (8S)-8-amino-7-oxononanoate + holo-[ACP] + CO2. It participates in cofactor biosynthesis; biotin biosynthesis. Catalyzes the decarboxylative condensation of pimeloyl-[acyl-carrier protein] and L-alanine to produce 8-amino-7-oxononanoate (AON), [acyl-carrier protein], and carbon dioxide. The polypeptide is 8-amino-7-oxononanoate synthase 1 (Polaromonas sp. (strain JS666 / ATCC BAA-500)).